Reading from the N-terminus, the 246-residue chain is tRNA pseudouridine synthase A (246 aa).

Aspartate 52 functions as the Nucleophile in the catalytic mechanism. Tyrosine 110 provides a ligand contact to substrate.

The protein belongs to the tRNA pseudouridine synthase TruA family. As to quaternary structure, homodimer.

The enzyme catalyses uridine(38/39/40) in tRNA = pseudouridine(38/39/40) in tRNA. Formation of pseudouridine at positions 38, 39 and 40 in the anticodon stem and loop of transfer RNAs. The protein is tRNA pseudouridine synthase A of Exiguobacterium sp. (strain ATCC BAA-1283 / AT1b).